The chain runs to 284 residues: MQFFYTPNFNPIILKVGCISFYWYGMMYVLSFIFAMWFLKYRKRYIVNDIFSSTSEIENLLYLNFLGVVIGGRIGYVLFYQWSMLSQDKLWFFKLWEGGMSFHGGLIGVIISIMWFSYCKNQSFLKISDFIVPAVPVGLGLGRLGNFINGELWGRVTFDIPWAMLFKNALLQDLLTLKIHPEWKFFFDYYGALPRHPSQLYEMILEGIVLFVVIYIFSCKSRPEGSISGLFLLLYGLFRIIIEFFRQPDIHIGLINNFITLGQVLSFPMVIFGFIIMYVSYKFK.

7 consecutive transmembrane segments (helical) span residues 19–39 (ISFY…MWFL), 60–80 (LLYL…VLFY), 98–118 (GGMS…WFSY), 130–150 (FIVP…FING), 199–219 (QLYE…IFSC), 225–245 (GSIS…IEFF), and 258–278 (FITL…IIMY). Arginine 143 provides a ligand contact to a 1,2-diacyl-sn-glycero-3-phospho-(1'-sn-glycerol).

Belongs to the Lgt family.

The protein resides in the cell inner membrane. It catalyses the reaction L-cysteinyl-[prolipoprotein] + a 1,2-diacyl-sn-glycero-3-phospho-(1'-sn-glycerol) = an S-1,2-diacyl-sn-glyceryl-L-cysteinyl-[prolipoprotein] + sn-glycerol 1-phosphate + H(+). The protein operates within protein modification; lipoprotein biosynthesis (diacylglyceryl transfer). In terms of biological role, catalyzes the transfer of the diacylglyceryl group from phosphatidylglycerol to the sulfhydryl group of the N-terminal cysteine of a prolipoprotein, the first step in the formation of mature lipoproteins. The polypeptide is Phosphatidylglycerol--prolipoprotein diacylglyceryl transferase (Blochmanniella floridana).